A 1483-amino-acid chain; its full sequence is Chromosome partition protein MukB (1483 aa).

34 to 41 contributes to the ATP binding site; it reads GGNGAGKS. Coiled coils occupy residues 311–426 and 547–607; these read EMAR…LQRA and GQQV…WLAA. The flexible hinge stretch occupies residues 666-783; that stretch reads PGGSEDARLN…KVPLFGRAAR (118 aa). 2 coiled-coil regions span residues 835 to 1115 and 1206 to 1266; these read EAAL…SAKA and DDPV…QAVS. The interval 850–870 is disordered; the sequence is RELNNHESENQQQRQQYEQAK.

This sequence belongs to the SMC family. MukB subfamily. In terms of assembly, homodimerization via its hinge domain. Binds to DNA via its C-terminal region. Interacts, and probably forms a ternary complex, with MukE and MukF via its C-terminal region. The complex formation is stimulated by calcium or magnesium. Interacts with tubulin-related protein FtsZ.

The protein localises to the cytoplasm. Its subcellular location is the nucleoid. Plays a central role in chromosome condensation, segregation and cell cycle progression. Functions as a homodimer, which is essential for chromosome partition. Involved in negative DNA supercoiling in vivo, and by this means organize and compact chromosomes. May achieve or facilitate chromosome segregation by condensation DNA from both sides of a centrally located replisome during cell division. The protein is Chromosome partition protein MukB of Erwinia tasmaniensis (strain DSM 17950 / CFBP 7177 / CIP 109463 / NCPPB 4357 / Et1/99).